Consider the following 925-residue polypeptide: Neuronal PAS domain-containing protein 3 (925 aa).

A bHLH domain is found at 58–111 (LRKEKSRDAARSRRGKENFEFYELAKLLPLPAAITSQLDKASIIRLTISYLKMR). The DNA-binding stretch occupies residues 60–71 (KEKSRDAARSRR). Disordered regions lie at residues 119 to 138 (PPWN…KGAQ) and 219 to 257 (LPPG…SPSL). One can recognise a PAS 1 domain in the interval 152–222 (EAHLGSHILQ…EQLGMKLPPG (71 aa)). Low complexity predominate over residues 234 to 256 (AASSASSSSQSETPEPVETTSPS). Residues 324 to 394 (PPPTINEVRI…HSHLDLLNKG (71 aa)) enclose the PAS 2 domain. Residues 398 to 441 (TKYYRWMQKNGGYIWIQSSATIAINAKNANEKNIIWVNYLLSNP) enclose the PAC domain. Disordered regions lie at residues 457 to 555 (PEKA…FGAL), 576 to 645 (PCES…SSPH), and 664 to 774 (NESS…GASN). Composition is skewed to basic and acidic residues over residues 484-493 (ENSKSDEKGN) and 529-549 (DSRD…KAAE). A compositionally biased stretch (basic residues) spans 601–622 (KHQKRKRRRKRQKGGSASRRRL). A compositionally biased stretch (polar residues) spans 680 to 690 (NESPYSMTKPP). 2 stretches are compositionally biased toward gly residues: residues 700-710 (GQGGSIGGGGA) and 760-771 (GGGAGSGGGGPG).

As to quaternary structure, efficient DNA binding requires dimerization with another bHLH protein. Interacts with ARNT; forms a heterodimer that binds core DNA sequence 5'-[AG]CGTG-3' within the hypoxia response element (HRE) of target gene promoters. In terms of tissue distribution, detected exclusively in adult brain in inhibitory interneurons.

The protein resides in the nucleus. Functionally, may play a broad role in neurogenesis. May control regulatory pathways relevant to schizophrenia and to psychotic illness. This is Neuronal PAS domain-containing protein 3 (Npas3) from Mus musculus (Mouse).